We begin with the raw amino-acid sequence, 861 residues long: Transcription factor opdJ (861 aa).

A DNA-binding region (zn(2)-C6 fungal-type) is located at residues 11-37 (CSHCSKAKARCDRKVPCSRCVSKQLVC).

It localises to the nucleus. Transcription factor that positively regulates the gene cluster that mediates the biosynthesis of oxopyrrolidines, polyketide-amino acid hybrid compounds with feature structures of tetramic acid. This is Transcription factor opdJ from Penicillium oxalicum (strain 114-2 / CGMCC 5302) (Penicillium decumbens).